Consider the following 163-residue polypeptide: I-Kappa-B like protein N3 (163 aa).

ANK repeat units lie at residues 62-95 and 100-130; these read LGDT…NLNT and NGDT…NLQT.

The protein belongs to the polydnaviridae I-Kappa-B like protein family.

In terms of biological role, suppresses the host immune response through NF-kappa-B inactivation. Possesses ankyrin repeat domains required for NF-kappa-B binding but lacks the regulatory regions required for dissociation from NF-kappa-B and degradation. Therefore, prevents host NF-kappa-B release and subsequent activation. This is I-Kappa-B like protein N3 (N6) from Microplitis demolitor (Parasitoid wasp).